The chain runs to 757 residues: Probable serine/threonine-protein kinase pknA2 (757 aa).

The Protein kinase domain maps to 14-274 (YRIVRNIAEG…DGAAAAEELS (261 aa)). Residues 20–28 (IAEGGMATV) and lysine 43 contribute to the ATP site. The active-site Proton acceptor is aspartate 140. Positions 344–387 (DTGGAADVNPPAPPVAPTTALDSSTPADASAPHKTQIMAQSGSE) are disordered. 3 PASTA domains span residues 466–539 (DANA…VVSK), 545–614 (TIPK…TLSK), and 615–681 (GPMP…VISK).

Belongs to the protein kinase superfamily. Ser/Thr protein kinase family.

It catalyses the reaction L-seryl-[protein] + ATP = O-phospho-L-seryl-[protein] + ADP + H(+). The catalysed reaction is L-threonyl-[protein] + ATP = O-phospho-L-threonyl-[protein] + ADP + H(+). This Bifidobacterium longum (strain NCC 2705) protein is Probable serine/threonine-protein kinase pknA2 (pknA2).